We begin with the raw amino-acid sequence, 792 residues long: Xaa-Pro dipeptidyl-peptidase (792 aa).

Catalysis depends on charge relay system residues Ser363, Asp482, and His513.

It belongs to the peptidase S15 family. In terms of assembly, homodimer.

It localises to the cytoplasm. The enzyme catalyses Hydrolyzes Xaa-Pro-|- bonds to release unblocked, N-terminal dipeptides from substrates including Ala-Pro-|-p-nitroanilide and (sequentially) Tyr-Pro-|-Phe-Pro-|-Gly-Pro-|-Ile.. Removes N-terminal dipeptides sequentially from polypeptides having unsubstituted N-termini provided that the penultimate residue is proline. This is Xaa-Pro dipeptidyl-peptidase (pepX) from Lactobacillus delbrueckii subsp. lactis.